The sequence spans 228 residues: Small ribosomal subunit protein uS2 (228 aa).

The protein belongs to the universal ribosomal protein uS2 family.

In Buchnera aphidicola subsp. Baizongia pistaciae (strain Bp), this protein is Small ribosomal subunit protein uS2.